The following is a 316-amino-acid chain: DNA-directed RNA polymerase subunit alpha (316 aa).

Positions 1–233 (MCMSQFPIEF…HWFNPLQTLE (233 aa)) are alpha N-terminal domain (alpha-NTD). Residues 245 to 316 (MAQLSNMLIE…LHCQLKKYVD (72 aa)) form an alpha C-terminal domain (alpha-CTD) region.

It belongs to the RNA polymerase alpha chain family. In plastids the minimal PEP RNA polymerase catalytic core is composed of four subunits: alpha, beta, beta', and beta''. When a (nuclear-encoded) sigma factor is associated with the core the holoenzyme is formed, which can initiate transcription.

Its subcellular location is the plastid. It localises to the chloroplast. It catalyses the reaction RNA(n) + a ribonucleoside 5'-triphosphate = RNA(n+1) + diphosphate. DNA-dependent RNA polymerase catalyzes the transcription of DNA into RNA using the four ribonucleoside triphosphates as substrates. The sequence is that of DNA-directed RNA polymerase subunit alpha from Cyanidioschyzon merolae (strain NIES-3377 / 10D) (Unicellular red alga).